A 66-amino-acid chain; its full sequence is Large ribosomal subunit protein bL31 (66 aa).

Zn(2+) contacts are provided by Cys-16, Cys-18, Cys-36, and Cys-39.

This sequence belongs to the bacterial ribosomal protein bL31 family. Type A subfamily. In terms of assembly, part of the 50S ribosomal subunit. Zn(2+) serves as cofactor.

Its function is as follows. Binds the 23S rRNA. The protein is Large ribosomal subunit protein bL31 of Geobacillus kaustophilus (strain HTA426).